The primary structure comprises 326 residues: Transmembrane protein 255B (326 aa).

The next 4 helical transmembrane spans lie at 26–46, 55–75, 85–105, and 200–220; these read LWFV…GLAA, VGGY…IIGI, LVAA…CAIV, and AVLN…LGAF. Residues 284 to 326 form a disordered region; sequence LASSEDLQPPSPSSSGSGLPGQAPPCYAPTYFPPGEKPPPYAP. Residues 305–326 are compositionally biased toward pro residues; sequence QAPPCYAPTYFPPGEKPPPYAP.

It belongs to the TMEM255 family.

The protein resides in the membrane. The chain is Transmembrane protein 255B (TMEM255B) from Homo sapiens (Human).